Reading from the N-terminus, the 486-residue chain is Glutamyl-tRNA(Gln) amidotransferase subunit A (486 aa).

Catalysis depends on charge relay system residues lysine 74 and serine 149. Serine 173 (acyl-ester intermediate) is an active-site residue.

Belongs to the amidase family. GatA subfamily. As to quaternary structure, heterotrimer of A, B and C subunits.

The enzyme catalyses L-glutamyl-tRNA(Gln) + L-glutamine + ATP + H2O = L-glutaminyl-tRNA(Gln) + L-glutamate + ADP + phosphate + H(+). Allows the formation of correctly charged Gln-tRNA(Gln) through the transamidation of misacylated Glu-tRNA(Gln) in organisms which lack glutaminyl-tRNA synthetase. The reaction takes place in the presence of glutamine and ATP through an activated gamma-phospho-Glu-tRNA(Gln). The chain is Glutamyl-tRNA(Gln) amidotransferase subunit A from Prochlorococcus marinus (strain SARG / CCMP1375 / SS120).